A 257-amino-acid polypeptide reads, in one-letter code: Outer dense fiber protein 4 (257 aa).

The tract at residues 1-41 (MDAEYSGNEFPRSEGERDQHQRPGKERKSGEAGWGTGELGQ) is disordered. The segment covering 11 to 30 (PRSEGERDQHQRPGKERKSG) has biased composition (basic and acidic residues). A Phosphoserine modification is found at serine 64. 3 consecutive transmembrane segments (helical) span residues 80-100 (AQVLASELSLVAFILLLVVAF), 152-172 (VTFIFSTLMLFPINIWIFELE), and 179-199 (IGWSYFIGWLVLILYFTCAIL).

As to expression, expressed in testis and sperm; especially localized to sperm tail (at protein level).

The protein localises to the membrane. Its function is as follows. Component of the outer dense fibers (ODF) of spermatozoa which could be involved in sperm tail structure, sperm movement and general organization of cellular cytoskeleton. This chain is Outer dense fiber protein 4 (ODF4), found in Homo sapiens (Human).